The sequence spans 241 residues: Octanoyltransferase (241 aa).

One can recognise a BPL/LPL catalytic domain in the interval 49 to 233 (GEASELVWLL…AFGEVFGPSE (185 aa)). Substrate contacts are provided by residues 87–94 (RGGQVTYH), 162–164 (AIG), and 175–177 (GIS). The active-site Acyl-thioester intermediate is cysteine 193.

The protein belongs to the LipB family.

The protein localises to the cytoplasm. It carries out the reaction octanoyl-[ACP] + L-lysyl-[protein] = N(6)-octanoyl-L-lysyl-[protein] + holo-[ACP] + H(+). The protein operates within protein modification; protein lipoylation via endogenous pathway; protein N(6)-(lipoyl)lysine from octanoyl-[acyl-carrier-protein]: step 1/2. Functionally, catalyzes the transfer of endogenously produced octanoic acid from octanoyl-acyl-carrier-protein onto the lipoyl domains of lipoate-dependent enzymes. Lipoyl-ACP can also act as a substrate although octanoyl-ACP is likely to be the physiological substrate. This is Octanoyltransferase from Nitrobacter hamburgensis (strain DSM 10229 / NCIMB 13809 / X14).